The following is a 273-amino-acid chain: Ribonuclease PH (273 aa).

Residues R86 and 124–126 (GTR) each bind phosphate. The tract at residues 254 to 273 (GHQEPGEGAGVSLAPGGGGL) is disordered.

The protein belongs to the RNase PH family. As to quaternary structure, homohexameric ring arranged as a trimer of dimers.

It carries out the reaction tRNA(n+1) + phosphate = tRNA(n) + a ribonucleoside 5'-diphosphate. Its function is as follows. Phosphorolytic 3'-5' exoribonuclease that plays an important role in tRNA 3'-end maturation. Removes nucleotide residues following the 3'-CCA terminus of tRNAs; can also add nucleotides to the ends of RNA molecules by using nucleoside diphosphates as substrates, but this may not be physiologically important. Probably plays a role in initiation of 16S rRNA degradation (leading to ribosome degradation) during starvation. The polypeptide is Ribonuclease PH (Symbiobacterium thermophilum (strain DSM 24528 / JCM 14929 / IAM 14863 / T)).